The chain runs to 399 residues: MTKKRHLFTSESVTEGHPDKICDQISDSILDAILSKDANARVACETTVTTGLVLVAGEITTSTYVDIPKIVRETIQGIGYTRAKYGFDAETCAVLTSIDEQSADIAMGVDQALEAREGQMTDAEIEAIGAGDQGLMFGFACNETQELMPLPISLAHKLARRLTEVRKDDTLSYLRPDGKTQVTVEYDENGKPVRVDTIVISTQHHPDVTWEEIDRDLKEHVIKAVVPAELMDGETKFFINPTGRFVIGGPQGDAGLTGRKIIVDTYGGYARHGGGAFSGKDATKVDRSAAYAARYVAKNIVAAGLADKAEVQLAYAIGVAQPVSISVDTFGTGKVSEDVLVELVRNNFDLRPAGIIKMLDLRRPIYKQTAAYGHFGRTDVDLSWERTDKAAALKEQAGL.

His-17 contacts ATP. Residue Asp-19 participates in Mg(2+) binding. Glu-45 contacts K(+). Positions 58 and 101 each coordinate L-methionine. Residues 101-111 (QSADIAMGVDQ) are flexible loop. ATP-binding positions include 177 to 179 (DGK), 244 to 245 (RF), Asp-253, 259 to 260 (RK), Ala-276, and Lys-280. Asp-253 serves as a coordination point for L-methionine. Lys-284 contacts L-methionine.

Belongs to the AdoMet synthase family. As to quaternary structure, homotetramer; dimer of dimers. Requires Mg(2+) as cofactor. K(+) serves as cofactor.

Its subcellular location is the cytoplasm. The catalysed reaction is L-methionine + ATP + H2O = S-adenosyl-L-methionine + phosphate + diphosphate. The protein operates within amino-acid biosynthesis; S-adenosyl-L-methionine biosynthesis; S-adenosyl-L-methionine from L-methionine: step 1/1. In terms of biological role, catalyzes the formation of S-adenosylmethionine (AdoMet) from methionine and ATP. The overall synthetic reaction is composed of two sequential steps, AdoMet formation and the subsequent tripolyphosphate hydrolysis which occurs prior to release of AdoMet from the enzyme. In Bacillus cereus (strain G9842), this protein is S-adenosylmethionine synthase.